The following is a 583-amino-acid chain: Radixin (583 aa).

One can recognise an FERM domain in the interval 5 to 295 (INVRVTTMDA…GNHELYMRRR (291 aa)). 60–63 (KLNK) contacts a 1,2-diacyl-sn-glycero-3-phospho-(1D-myo-inositol). N6-succinyllysine is present on Lys-83. Lys-278 provides a ligand contact to a 1,2-diacyl-sn-glycero-3-phospho-(1D-myo-inositol). Disordered stretches follow at residues 310-336 (REEK…AEKE), 374-407 (ELDQ…AKQA), and 458-526 (KTKE…RVNK). Residues 374 to 400 (ELDQERKRAKEEAERLEKERRAAEEAK) are compositionally biased toward basic and acidic residues. Residues 469–480 (APPPPPPPPVVP) show a composition bias toward pro residues. Composition is skewed to basic and acidic residues over residues 483 to 492 (ENEHDEHDEN) and 506 to 525 (MNHR…ERVN). The residue at position 564 (Thr-564) is a Phosphothreonine; by ROCK2.

In terms of assembly, interacts with CPNE1 (via VWFA domain) and CPNE4 (via VWFA domain). Binds NHERF1. Interacts with NHERF1, NHERF2, LAYN, MME/NEP and ICAM2. Interacts (via FERM domain) with SPN/CD43 cytoplasmic tail. Interacts with CD44. Interacts with CLIC5; may work together in a complex which also includes EZR and MYO6 to stabilize linkages between the plasma membrane and subjacent actin cytoskeleton at the base of stereocilia. Post-translationally, phosphorylated by tyrosine-protein kinases. Phosphorylation by ROCK2 suppresses the head-to-tail association of the N-terminal and C-terminal halves resulting in an opened conformation which is capable of actin and membrane-binding.

The protein resides in the cell membrane. Its subcellular location is the cytoplasm. It is found in the cytoskeleton. The protein localises to the cleavage furrow. It localises to the cell projection. The protein resides in the microvillus. Its subcellular location is the stereocilium. A head-to-tail association, of the N-terminal and C-terminal halves results in a closed conformation (inactive form) which is incapable of actin or membrane-binding. Functionally, probably plays a crucial role in the binding of the barbed end of actin filaments to the plasma membrane. This Sus scrofa (Pig) protein is Radixin (RDX).